The chain runs to 405 residues: Na(+)-translocating NADH-quinone reductase subunit F (405 aa).

Residues 3–23 form a helical membrane-spanning segment; that stretch reads IILGIVMFTVIVLVLALMILF. The 2Fe-2S ferredoxin-type domain maps to 32 to 124; the sequence is GDITIKVNGE…DMDIEVPEEV (93 aa). 4 residues coordinate [2Fe-2S] cluster: Cys-67, Cys-73, Cys-76, and Cys-108. The FAD-binding FR-type domain maps to 127-267; the sequence is VKKWECTVIS…SGPFGEFFAK (141 aa).

Belongs to the NqrF family. Composed of six subunits; NqrA, NqrB, NqrC, NqrD, NqrE and NqrF. [2Fe-2S] cluster serves as cofactor. It depends on FAD as a cofactor.

The protein localises to the cell inner membrane. It catalyses the reaction a ubiquinone + n Na(+)(in) + NADH + H(+) = a ubiquinol + n Na(+)(out) + NAD(+). Functionally, NQR complex catalyzes the reduction of ubiquinone-1 to ubiquinol by two successive reactions, coupled with the transport of Na(+) ions from the cytoplasm to the periplasm. The first step is catalyzed by NqrF, which accepts electrons from NADH and reduces ubiquinone-1 to ubisemiquinone by a one-electron transfer pathway. This Neisseria meningitidis serogroup C / serotype 2a (strain ATCC 700532 / DSM 15464 / FAM18) protein is Na(+)-translocating NADH-quinone reductase subunit F.